A 110-amino-acid chain; its full sequence is Phosphoribosyl-ATP pyrophosphatase (110 aa).

Belongs to the PRA-PH family.

The protein resides in the cytoplasm. The enzyme catalyses 1-(5-phospho-beta-D-ribosyl)-ATP + H2O = 1-(5-phospho-beta-D-ribosyl)-5'-AMP + diphosphate + H(+). It participates in amino-acid biosynthesis; L-histidine biosynthesis; L-histidine from 5-phospho-alpha-D-ribose 1-diphosphate: step 2/9. The polypeptide is Phosphoribosyl-ATP pyrophosphatase (Hahella chejuensis (strain KCTC 2396)).